Here is a 474-residue protein sequence, read N- to C-terminus: MANKNVGTITQVLGAVVDVRFDGQLPAILSALHLEHQGKKLVLEVAQHLGESTVRTIAMDSTDGLTRGTEVVDTGAAIQMPVGPETLGRIINVIGEPIDERGPIGNKTTLPIHADAPEFVDQSTETEILVTGIKVIDLLAPYCKGGKIGLCGGAGVGKTVLIMELINNIAKAHGGYSVFAGVGERTREGNDLYHEMIESGVIKLDGPGSKVALVYGQMNEPPGARARVALSGLTVAEYFRDVEGQDVLFFVDNIFRFTQAGSEVSALLGRIPSAVGYQPTLATDMGALQERITSTKKGSITSVQAIYVPADDLTDPAPATSFAHLDATTVLNRQIAELGIYPAVDPLDSTSRVLDPRVVGNDHYQTARDVQRILQTYKSLQDIIAILGMDELSEEDKLVVSRARKIQRFLSQPFHVAEIFTGSPGKLVAIDDTIKGFKAIVAGEYDHLPEAAFYMVGGIDEVIEKAKKMAAEAA.

152-159 (GGAGVGKT) is an ATP binding site.

The protein belongs to the ATPase alpha/beta chains family. F-type ATPases have 2 components, CF(1) - the catalytic core - and CF(0) - the membrane proton channel. CF(1) has five subunits: alpha(3), beta(3), gamma(1), delta(1), epsilon(1). CF(0) has three main subunits: a(1), b(2) and c(9-12). The alpha and beta chains form an alternating ring which encloses part of the gamma chain. CF(1) is attached to CF(0) by a central stalk formed by the gamma and epsilon chains, while a peripheral stalk is formed by the delta and b chains.

It localises to the cell inner membrane. The catalysed reaction is ATP + H2O + 4 H(+)(in) = ADP + phosphate + 5 H(+)(out). In terms of biological role, produces ATP from ADP in the presence of a proton gradient across the membrane. The catalytic sites are hosted primarily by the beta subunits. The sequence is that of ATP synthase subunit beta from Paramagnetospirillum magneticum (strain ATCC 700264 / AMB-1) (Magnetospirillum magneticum).